A 146-amino-acid polypeptide reads, in one-letter code: Phospholipase A2 OS2 (146 aa).

The N-terminal stretch at 1 to 27 is a signal peptide; it reads MHPAHLLVLLAVCVSLLGASDIPPLPL. 7 disulfide bridges follow: C38-C99, C54-C145, C56-C72, C71-C126, C78-C119, C88-C112, and C106-C117. 3 residues coordinate Ca(2+): Y55, G57, and G59. H75 is an active-site residue. D76 serves as a coordination point for Ca(2+). The active site involves D120.

Belongs to the phospholipase A2 family. Group I subfamily. D49 sub-subfamily. Monomer. Requires Ca(2+) as cofactor. As to expression, expressed by the venom gland.

The protein resides in the secreted. It carries out the reaction a 1,2-diacyl-sn-glycero-3-phosphocholine + H2O = a 1-acyl-sn-glycero-3-phosphocholine + a fatty acid + H(+). Its function is as follows. Snake venom phospholipase A2 (PLA2) that shows high presynaptic neurotoxicity in vertebrata that is independent of catalytic activity, as well as local myotoxicity when intramuscularly injected into mice. Blocks acetylcholine release in Aplysia neurons, and potentiates pro-inflammatory cellular signaling. Potentiates glutamate excitoxicity when coinjected into brain of rats. May act by binding in a calcium-dependent fashion and with high affinity to a neuronal-type (N-type) PLA2 receptor, and with very high affinity to a muscle-type (M-type) PLA2 receptor. In vitro, shows a high-specific activity on E.coli membranes and is more efficient on the anionic phospholipid POPG than on the anionic phospholipid POPS or the zwitterionic phospholipid POPC. Exerts catalytically-independent anti-HIV (IC(50) is 35 nM) activity and catalytically-dependent antimalarial activity (IC(50) is 3.1 nM when tested on P.falciparum grown in serum that contains lipoproteins). PLA2 catalyzes the calcium-dependent hydrolysis of the 2-acyl groups in 3-sn-phosphoglycerides. The sequence is that of Phospholipase A2 OS2 from Oxyuranus scutellatus scutellatus (Australian taipan).